We begin with the raw amino-acid sequence, 239 residues long: Lactate utilization protein A 2 (239 aa).

This sequence belongs to the LutA/YkgE family.

Is involved in L-lactate degradation and allows cells to grow with lactate as the sole carbon source. This chain is Lactate utilization protein A 2, found in Bacillus mycoides (strain KBAB4) (Bacillus weihenstephanensis).